The sequence spans 316 residues: GMP reductase (316 aa).

Cys-175 serves as the catalytic Thioimidate intermediate. An NADP(+)-binding site is contributed by 202-225 (VIADGGIVEHGDIAKALVCGATMV).

This sequence belongs to the IMPDH/GMPR family. GuaC type 2 subfamily.

The catalysed reaction is IMP + NH4(+) + NADP(+) = GMP + NADPH + 2 H(+). Its function is as follows. Catalyzes the irreversible NADPH-dependent deamination of GMP to IMP. It functions in the conversion of nucleobase, nucleoside and nucleotide derivatives of G to A nucleotides, and in maintaining the intracellular balance of A and G nucleotides. The protein is GMP reductase of Chromobacterium violaceum (strain ATCC 12472 / DSM 30191 / JCM 1249 / CCUG 213 / NBRC 12614 / NCIMB 9131 / NCTC 9757 / MK).